A 278-amino-acid polypeptide reads, in one-letter code: Shikimate dehydrogenase (NADP(+)) (278 aa).

Shikimate is bound by residues 18 to 20 (SKS) and Thr-65. Lys-69 acts as the Proton acceptor in catalysis. Glu-81 serves as a coordination point for NADP(+). Shikimate is bound by residues Asn-90 and Asp-106. NADP(+) is bound by residues 130 to 134 (GAGGA) and 154 to 159 (NRTFAK). Tyr-223 serves as a coordination point for shikimate. Gly-241 is a binding site for NADP(+).

This sequence belongs to the shikimate dehydrogenase family. As to quaternary structure, homodimer.

It catalyses the reaction shikimate + NADP(+) = 3-dehydroshikimate + NADPH + H(+). The protein operates within metabolic intermediate biosynthesis; chorismate biosynthesis; chorismate from D-erythrose 4-phosphate and phosphoenolpyruvate: step 4/7. Involved in the biosynthesis of the chorismate, which leads to the biosynthesis of aromatic amino acids. Catalyzes the reversible NADPH linked reduction of 3-dehydroshikimate (DHSA) to yield shikimate (SA). The sequence is that of Shikimate dehydrogenase (NADP(+)) from Vibrio cholerae serotype O1 (strain ATCC 39541 / Classical Ogawa 395 / O395).